We begin with the raw amino-acid sequence, 213 residues long: MKALKIALTKGRLERDAVALLKKAGIDCSSMLDKKRKLIFHSNSQPVSFILVKAVDVMTYVKHGVADIGIVGKDVLMEASKSHYEMLDLEIGKCQFCLASTPDFDPSNYRRKIIATKYPTVASKFFREKGEDVEIIKIEGSVEIAPVLGLADAIIDIVETGSTLKENGLLIYEKMYPISARLIVNKASLKQNKTQIFQLIDQLEQAIKEERTK.

Belongs to the ATP phosphoribosyltransferase family. Short subfamily. In terms of assembly, heteromultimer composed of HisG and HisZ subunits.

The protein localises to the cytoplasm. It carries out the reaction 1-(5-phospho-beta-D-ribosyl)-ATP + diphosphate = 5-phospho-alpha-D-ribose 1-diphosphate + ATP. It functions in the pathway amino-acid biosynthesis; L-histidine biosynthesis; L-histidine from 5-phospho-alpha-D-ribose 1-diphosphate: step 1/9. In terms of biological role, catalyzes the condensation of ATP and 5-phosphoribose 1-diphosphate to form N'-(5'-phosphoribosyl)-ATP (PR-ATP). Has a crucial role in the pathway because the rate of histidine biosynthesis seems to be controlled primarily by regulation of HisG enzymatic activity. The sequence is that of ATP phosphoribosyltransferase from Listeria welshimeri serovar 6b (strain ATCC 35897 / DSM 20650 / CCUG 15529 / CIP 8149 / NCTC 11857 / SLCC 5334 / V8).